Here is a 96-residue protein sequence, read N- to C-terminus: Aspartyl/glutamyl-tRNA(Asn/Gln) amidotransferase subunit C (96 aa).

Belongs to the GatC family. Heterotrimer of A, B and C subunits.

It carries out the reaction L-glutamyl-tRNA(Gln) + L-glutamine + ATP + H2O = L-glutaminyl-tRNA(Gln) + L-glutamate + ADP + phosphate + H(+). The enzyme catalyses L-aspartyl-tRNA(Asn) + L-glutamine + ATP + H2O = L-asparaginyl-tRNA(Asn) + L-glutamate + ADP + phosphate + 2 H(+). In terms of biological role, allows the formation of correctly charged Asn-tRNA(Asn) or Gln-tRNA(Gln) through the transamidation of misacylated Asp-tRNA(Asn) or Glu-tRNA(Gln) in organisms which lack either or both of asparaginyl-tRNA or glutaminyl-tRNA synthetases. The reaction takes place in the presence of glutamine and ATP through an activated phospho-Asp-tRNA(Asn) or phospho-Glu-tRNA(Gln). The sequence is that of Aspartyl/glutamyl-tRNA(Asn/Gln) amidotransferase subunit C from Geobacillus kaustophilus (strain HTA426).